A 550-amino-acid chain; its full sequence is Glucose-6-phosphate isomerase 2 (550 aa).

The active-site Proton donor is glutamate 359. Catalysis depends on residues histidine 390 and lysine 514.

It belongs to the GPI family.

Its subcellular location is the cytoplasm. It carries out the reaction alpha-D-glucose 6-phosphate = beta-D-fructose 6-phosphate. The protein operates within carbohydrate biosynthesis; gluconeogenesis. Its pathway is carbohydrate degradation; glycolysis; D-glyceraldehyde 3-phosphate and glycerone phosphate from D-glucose: step 2/4. In terms of biological role, catalyzes the reversible isomerization of glucose-6-phosphate to fructose-6-phosphate. The polypeptide is Glucose-6-phosphate isomerase 2 (Streptomyces avermitilis (strain ATCC 31267 / DSM 46492 / JCM 5070 / NBRC 14893 / NCIMB 12804 / NRRL 8165 / MA-4680)).